A 148-amino-acid chain; its full sequence is uncharacterized protein (148 aa).

An N-acetyltransferase domain is found at 8-148 (QVMQEPELKI…DGFLTLILRN (141 aa)).

Belongs to the acetyltransferase family.

This is an uncharacterized protein from Bacillus subtilis (strain 168).